We begin with the raw amino-acid sequence, 718 residues long: DNA ligase (718 aa).

NAD(+) is bound by residues 44 to 48, 93 to 94, and Glu127; these read DADYD and SL. The N6-AMP-lysine intermediate role is filled by Lys129. NAD(+)-binding residues include Arg150, Glu186, Lys302, and Lys326. Cys432, Cys435, Cys456, and Cys462 together coordinate Zn(2+). The 79-residue stretch at 640 to 718 folds into the BRCT domain; sequence TAGSPVAGKT…EDEWLALISG (79 aa).

The protein belongs to the NAD-dependent DNA ligase family. LigA subfamily. Mg(2+) serves as cofactor. Mn(2+) is required as a cofactor.

It catalyses the reaction NAD(+) + (deoxyribonucleotide)n-3'-hydroxyl + 5'-phospho-(deoxyribonucleotide)m = (deoxyribonucleotide)n+m + AMP + beta-nicotinamide D-nucleotide.. Its function is as follows. DNA ligase that catalyzes the formation of phosphodiester linkages between 5'-phosphoryl and 3'-hydroxyl groups in double-stranded DNA using NAD as a coenzyme and as the energy source for the reaction. It is essential for DNA replication and repair of damaged DNA. The polypeptide is DNA ligase (Rhizobium etli (strain CIAT 652)).